The primary structure comprises 519 residues: MTDLQQVVAHSFAALAASRTTFRAQLKAREIGIISSVSFGVAQVSGLANVASEEVLKFSGDIYGIAFNVDQDSIGVVLLGDYWQLQSGDEVERTGRVMDVAVGLGLLGRVIDPLGRPLDDKGPIESSERLPVERPAAPIMDRAPVTVPLQTGLKVIDALIPIGRGQRELILGDRQTGKTTIAIDTILNQHDQNVLCVYCAIGQRASAVAKTIAILKAKGALDYTLVMVSEGNAPPGFAYIAPYAATSIAEYFMEKGRDVLIVYDDLTQHARAYRELSLLLRRPPGREAFPGDIFYIHSRLLERATCLKQRHKGGSLTALPIIETEAQNISAYIPTNLISITDGQIYLSPTLFELGILPAVDVGRSVSRVGGKAQRPMYRAVAANLKLTYAQFEELETFARFGARLDQNSQDIITNGRRIRASLKQPQSSPMTVLEQITVLIALTEKLFDTVPLLKMREAEQALCLATTELPEDFLSRFNSAKILSDDDRNRIIDIARITLAPFQSPPDEDNGITSTPSN.

Residue 172–179 participates in ATP binding; the sequence is GDRQTGKT.

This sequence belongs to the ATPase alpha/beta chains family. In terms of assembly, F-type ATPases have 2 components, CF(1) - the catalytic core - and CF(0) - the membrane proton channel. CF(1) has five subunits: alpha(3), beta(3), gamma(1), delta(1), epsilon(1). CF(0) has three main subunits: a(1), b(2) and c(9-12). The alpha and beta chains form an alternating ring which encloses part of the gamma chain. CF(1) is attached to CF(0) by a central stalk formed by the gamma and epsilon chains, while a peripheral stalk is formed by the delta and b chains.

It is found in the cell inner membrane. The enzyme catalyses ATP + H2O + 4 H(+)(in) = ADP + phosphate + 5 H(+)(out). Its function is as follows. Produces ATP from ADP in the presence of a proton gradient across the membrane. The alpha chain is a regulatory subunit. This is ATP synthase subunit alpha 1 from Psychromonas ingrahamii (strain DSM 17664 / CCUG 51855 / 37).